Reading from the N-terminus, the 132-residue chain is uncharacterized protein (132 aa).

A disordered region spans residues 113–132 (LDPQSPLHSPPLSTSPDSRR).

This is an uncharacterized protein from Saccharomyces cerevisiae (strain ATCC 204508 / S288c) (Baker's yeast).